A 503-amino-acid polypeptide reads, in one-letter code: Maturase K (503 aa).

This sequence belongs to the intron maturase 2 family. MatK subfamily.

The protein resides in the plastid. It localises to the chloroplast. In terms of biological role, usually encoded in the trnK tRNA gene intron. Probably assists in splicing its own and other chloroplast group II introns. The protein is Maturase K of Purshia tridentata (Antelope bitterbrush).